Reading from the N-terminus, the 254-residue chain is NAD kinase (254 aa).

Aspartate 44 functions as the Proton acceptor in the catalytic mechanism. NAD(+) is bound by residues 44–45 (DG), 114–115 (NE), aspartate 144, alanine 152, 155–160 (TAYNYS), and alanine 179.

This sequence belongs to the NAD kinase family. The cofactor is a divalent metal cation.

The protein resides in the cytoplasm. It catalyses the reaction NAD(+) + ATP = ADP + NADP(+) + H(+). Functionally, involved in the regulation of the intracellular balance of NAD and NADP, and is a key enzyme in the biosynthesis of NADP. Catalyzes specifically the phosphorylation on 2'-hydroxyl of the adenosine moiety of NAD to yield NADP. The polypeptide is NAD kinase (Cereibacter sphaeroides (strain ATCC 17029 / ATH 2.4.9) (Rhodobacter sphaeroides)).